Here is a 688-residue protein sequence, read N- to C-terminus: DNA topoisomerase 1 (688 aa).

The Toprim domain occupies 3–113; sequence ENLVIVESPA…TENRVVFNEI (111 aa). The Mg(2+) site is built by Glu9 and Asp82. The Topo IA-type catalytic domain maps to 129–556; sequence EMELVDAQQA…FYSSFKQDVE (428 aa). Positions 163–168 are interaction with DNA; the sequence is SAGRVQ. The active-site O-(5'-phospho-DNA)-tyrosine intermediate is Tyr298. The segment at 322-349 is disordered; the sequence is YGNDYTSNRKSKGQGDQDAHEAIRPSST. Basic and acidic residues predominate over residues 334-344; the sequence is GQGDQDAHEAI. 3 C4-type zinc fingers span residues 576 to 602, 616 to 644, and 657 to 680; these read CEVCGSPMVIKMGRYGKFMACSNFPDC, CPKCKEGDVVERKSKKNRIFYGCSKYPEC, and CPKCEHYLVEKKQGRKSQVVCSNC.

It belongs to the type IA topoisomerase family. As to quaternary structure, monomer. The cofactor is Mg(2+).

The catalysed reaction is ATP-independent breakage of single-stranded DNA, followed by passage and rejoining.. Releases the supercoiling and torsional tension of DNA, which is introduced during the DNA replication and transcription, by transiently cleaving and rejoining one strand of the DNA duplex. Introduces a single-strand break via transesterification at a target site in duplex DNA. The scissile phosphodiester is attacked by the catalytic tyrosine of the enzyme, resulting in the formation of a DNA-(5'-phosphotyrosyl)-enzyme intermediate and the expulsion of a 3'-OH DNA strand. The free DNA strand then undergoes passage around the unbroken strand, thus removing DNA supercoils. Finally, in the religation step, the DNA 3'-OH attacks the covalent intermediate to expel the active-site tyrosine and restore the DNA phosphodiester backbone. This Staphylococcus saprophyticus subsp. saprophyticus (strain ATCC 15305 / DSM 20229 / NCIMB 8711 / NCTC 7292 / S-41) protein is DNA topoisomerase 1.